The primary structure comprises 142 residues: Putative 2'-deoxynucleoside 5'-phosphate N-hydrolase 1 (142 aa).

Substrate contacts are provided by residues 4 to 10 (FFSGSIR), tyrosine 19, histidine 36, glutamate 82, and 106 to 108 (SAM).

This sequence belongs to the 2'-deoxynucleoside 5'-phosphate N-hydrolase 1 family. Monomer and homodimer.

The catalysed reaction is a pyrimidine 2'-deoxyribonucleoside 5'-phosphate + H2O = a pyrimidine nucleobase + 2-deoxy-D-ribose 5-phosphate. The enzyme catalyses a purine 2'-deoxyribonucleoside 5'-phosphate + H2O = a purine nucleobase + 2-deoxy-D-ribose 5-phosphate. Its function is as follows. Catalyzes the cleavage of the N-glycosidic bond of deoxyribonucleoside 5'-monophosphates to yield deoxyribose 5-phosphate and a purine or pyrimidine base. In Syntrophotalea carbinolica (strain DSM 2380 / NBRC 103641 / GraBd1) (Pelobacter carbinolicus), this protein is Putative 2'-deoxynucleoside 5'-phosphate N-hydrolase 1.